An 88-amino-acid chain; its full sequence is UPF0367 protein syc2447_c (88 aa).

Belongs to the UPF0367 family.

The polypeptide is UPF0367 protein syc2447_c (Synechococcus sp. (strain ATCC 27144 / PCC 6301 / SAUG 1402/1) (Anacystis nidulans)).